Reading from the N-terminus, the 550-residue chain is Chaperonin GroEL (550 aa).

Residues 30-33 (TLGP), K51, 87-91 (DGTTT), G415, 479-481 (NAA), and D495 each bind ATP.

Belongs to the chaperonin (HSP60) family. Forms a cylinder of 14 subunits composed of two heptameric rings stacked back-to-back. Interacts with the co-chaperonin GroES.

The protein resides in the cytoplasm. The enzyme catalyses ATP + H2O + a folded polypeptide = ADP + phosphate + an unfolded polypeptide.. Together with its co-chaperonin GroES, plays an essential role in assisting protein folding. The GroEL-GroES system forms a nano-cage that allows encapsulation of the non-native substrate proteins and provides a physical environment optimized to promote and accelerate protein folding. This chain is Chaperonin GroEL, found in Aromatoleum aromaticum (strain DSM 19018 / LMG 30748 / EbN1) (Azoarcus sp. (strain EbN1)).